Here is a 411-residue protein sequence, read N- to C-terminus: LL-diaminopimelate aminotransferase (411 aa).

Tyrosine 15 and glycine 42 together coordinate substrate. Pyridoxal 5'-phosphate contacts are provided by residues tyrosine 72, 108–109 (SK), tyrosine 132, asparagine 187, tyrosine 218, and 246–248 (SFS). Lysine 109, tyrosine 132, and asparagine 187 together coordinate substrate. Lysine 249 carries the N6-(pyridoxal phosphate)lysine modification. The pyridoxal 5'-phosphate site is built by arginine 257 and asparagine 292. Substrate contacts are provided by asparagine 292 and arginine 388.

Belongs to the class-I pyridoxal-phosphate-dependent aminotransferase family. LL-diaminopimelate aminotransferase subfamily. Homodimer. The cofactor is pyridoxal 5'-phosphate.

The enzyme catalyses (2S,6S)-2,6-diaminopimelate + 2-oxoglutarate = (S)-2,3,4,5-tetrahydrodipicolinate + L-glutamate + H2O + H(+). It functions in the pathway amino-acid biosynthesis; L-lysine biosynthesis via DAP pathway; LL-2,6-diaminopimelate from (S)-tetrahydrodipicolinate (aminotransferase route): step 1/1. Involved in the synthesis of meso-diaminopimelate (m-DAP or DL-DAP), required for both lysine and peptidoglycan biosynthesis. Catalyzes the direct conversion of tetrahydrodipicolinate to LL-diaminopimelate. In Citrifermentans bemidjiense (strain ATCC BAA-1014 / DSM 16622 / JCM 12645 / Bem) (Geobacter bemidjiensis), this protein is LL-diaminopimelate aminotransferase.